Reading from the N-terminus, the 89-residue chain is Large ribosomal subunit protein uL29c (89 aa).

This sequence belongs to the universal ribosomal protein uL29 family.

The protein localises to the plastid. It is found in the chloroplast. The chain is Large ribosomal subunit protein uL29c (rpl29) from Trieres chinensis (Marine centric diatom).